The chain runs to 424 residues: Histidine--tRNA ligase (424 aa).

It belongs to the class-II aminoacyl-tRNA synthetase family. In terms of assembly, homodimer.

It is found in the cytoplasm. It carries out the reaction tRNA(His) + L-histidine + ATP = L-histidyl-tRNA(His) + AMP + diphosphate + H(+). The protein is Histidine--tRNA ligase of Salmonella arizonae (strain ATCC BAA-731 / CDC346-86 / RSK2980).